A 173-amino-acid chain; its full sequence is Bifunctional protein PyrR (173 aa).

Residues 93–105 carry the PRPP-binding motif; the sequence is VILVDDVLYTGRT.

The protein belongs to the purine/pyrimidine phosphoribosyltransferase family. PyrR subfamily. In terms of assembly, homodimer and homohexamer; in equilibrium.

It catalyses the reaction UMP + diphosphate = 5-phospho-alpha-D-ribose 1-diphosphate + uracil. Its function is as follows. Regulates transcriptional attenuation of the pyrimidine nucleotide (pyr) operon by binding in a uridine-dependent manner to specific sites on pyr mRNA. This disrupts an antiterminator hairpin in the RNA and favors formation of a downstream transcription terminator, leading to a reduced expression of downstream genes. Also displays a weak uracil phosphoribosyltransferase activity which is not physiologically significant. This chain is Bifunctional protein PyrR, found in Streptococcus pneumoniae (strain 70585).